Here is a 656-residue protein sequence, read N- to C-terminus: NADH-ubiquinone oxidoreductase chain 5 (656 aa).

A run of 17 helical transmembrane segments spans residues 4 to 21 (TLIILPLLGSIVSGFFGR), 28 to 50 (AHLITCVSVITTTFLAILAFFEV), 81 to 103 (LTVSMFITVLIVSSLVHIYSISY), 112 to 129 (RFFSYLSLFTFMMIILVT), 133 to 155 (YLIMFVGWEGVGVCSYLLVNFWF), 176 to 198 (TLLTVGMFAILWSFGNIDYSTVF), 208 to 230 (IITIIGICLLIGATAKSSQVGLH), 243 to 262 (VSALIHAATMVTAGVYLLMR), 272 to 294 (TVLVLCLWLGAITTVFSSLIGLF), 301 to 319 (VIAYSTMSQLGMMVIAVGL), 329 to 351 (LVNHAFYKALLFLGAGSVIHAVA), 364 to 386 (EFLPLTYSVMLIASLSLVAVPFM), 409 to 431 (IVYFVATIGAMFTTLYSAKVLYL), 452 to 471 (LFMTIPLIILAIFSIFFGYL), 514 to 536 (FVFTVSLSLLSVLLSEFLPKLLI), 603 to 625 (SLGNLSTGIVTTYALYILIGLIF), and 629 to 651 (LLYFSYNDNNLLILIIFTLFALL).

The protein belongs to the complex I subunit 5 family.

The protein localises to the mitochondrion inner membrane. The enzyme catalyses a ubiquinone + NADH + 5 H(+)(in) = a ubiquinol + NAD(+) + 4 H(+)(out). Core subunit of the mitochondrial membrane respiratory chain NADH dehydrogenase (Complex I) that is believed to belong to the minimal assembly required for catalysis. Complex I functions in the transfer of electrons from NADH to the respiratory chain. The immediate electron acceptor for the enzyme is believed to be ubiquinone. This chain is NADH-ubiquinone oxidoreductase chain 5 (nad5), found in Aspergillus niger.